The primary structure comprises 329 residues: Replication factor C small subunit 1 (329 aa).

ATP is bound at residue 44 to 51 (GPPGTGKT).

It belongs to the activator 1 small subunits family. RfcS subfamily. Heteromultimer composed of small subunits (RfcS) and large subunits (RfcL).

Functionally, part of the RFC clamp loader complex which loads the PCNA sliding clamp onto DNA. The protein is Replication factor C small subunit 1 of Pyrobaculum arsenaticum (strain DSM 13514 / JCM 11321 / PZ6).